The primary structure comprises 248 residues: Probable transcriptional regulatory protein Acid345_2125 (248 aa).

Belongs to the TACO1 family.

It localises to the cytoplasm. The sequence is that of Probable transcriptional regulatory protein Acid345_2125 from Koribacter versatilis (strain Ellin345).